A 155-amino-acid chain; its full sequence is Small ribosomal subunit protein uS13 (155 aa).

The span at 135-145 shows a compositional bias: basic residues; it reads QHTKTTGRRGR. A disordered region spans residues 135–155; it reads QHTKTTGRRGRTVGVSRTKGA. Over residues 146–155 the composition is skewed to low complexity; the sequence is TVGVSRTKGA.

Belongs to the universal ribosomal protein uS13 family. Component of the small ribosomal subunit.

It localises to the cytoplasm. Functionally, component of the small ribosomal subunit. The ribosome is a large ribonucleoprotein complex responsible for the synthesis of proteins in the cell. The polypeptide is Small ribosomal subunit protein uS13 (RPS18) (Entamoeba histolytica (strain ATCC 30459 / HM-1:IMSS / ABRM)).